The following is a 610-amino-acid chain: All-trans-retinol 13,14-reductase (610 aa).

Positions 1–18 (MWLPLVLLLAVLLLAVLC) are cleaved as a signal peptide.

This sequence belongs to the carotenoid/retinoid oxidoreductase family. CrtISO subfamily. It depends on NAD(+) as a cofactor. NADP(+) serves as cofactor. The cofactor is FAD. Expressed in liver; expression positively correlates with obesity and liver steatosis. Expressed in adipose tissue; expression tends to be decreased in obese versus lean individuals.

The protein resides in the endoplasmic reticulum membrane. It catalyses the reaction all-trans-13,14-dihydroretinol + A = all-trans-retinol + AH2. Functionally, catalyzes the saturation of all-trans-retinol to all-trans-13,14-dihydroretinol. Does not exhibit any activity toward all-trans-retinoic acid, nor 9-cis, 11-cis or 13-cis-retinol isomers. May play a role in the metabolism of vitamin A. Independently of retinol conversion, may regulate liver metabolism upstream of MLXIPL/ChREBP. May play a role in adipocyte differentiation. In Homo sapiens (Human), this protein is All-trans-retinol 13,14-reductase (RETSAT).